Here is a 318-residue protein sequence, read N- to C-terminus: Transaldolase (318 aa).

Residue K131 is the Schiff-base intermediate with substrate of the active site.

The protein belongs to the transaldolase family. Type 1 subfamily. Homodimer.

Its subcellular location is the cytoplasm. The catalysed reaction is D-sedoheptulose 7-phosphate + D-glyceraldehyde 3-phosphate = D-erythrose 4-phosphate + beta-D-fructose 6-phosphate. The protein operates within carbohydrate degradation; pentose phosphate pathway; D-glyceraldehyde 3-phosphate and beta-D-fructose 6-phosphate from D-ribose 5-phosphate and D-xylulose 5-phosphate (non-oxidative stage): step 2/3. Its function is as follows. Transaldolase is important for the balance of metabolites in the pentose-phosphate pathway. This Cellvibrio japonicus (strain Ueda107) (Pseudomonas fluorescens subsp. cellulosa) protein is Transaldolase.